Here is a 279-residue protein sequence, read N- to C-terminus: Phospholipase A and acyltransferase 5 (279 aa).

Disordered regions lie at residues 1-53 (MGLS…GLNS) and 70-117 (QLPA…ENEG). Residues 97–106 (LETTPSQKAD) show a composition bias toward polar residues. Residues 135–249 (LIEIFRIGYE…LRYGVPRSQQ (115 aa)) enclose the LRAT domain. Catalysis depends on residues H145 and H157. C233 functions as the Acyl-thioester intermediate in the catalytic mechanism.

The protein belongs to the H-rev107 family. Highest expression level in testis and pancreas.

It localises to the cytoplasm. The protein localises to the cytosol. The enzyme catalyses a 1,2-diacyl-sn-glycero-3-phosphocholine + H2O = a 1-acyl-sn-glycero-3-phosphocholine + a fatty acid + H(+). The catalysed reaction is a 1,2-diacyl-sn-glycero-3-phosphocholine + H2O = a 2-acyl-sn-glycero-3-phosphocholine + a fatty acid + H(+). It carries out the reaction 1-hexadecanoyl-2-(5Z,8Z,11Z,14Z-eicosatetraenoyl)-sn-glycero-3-phosphocholine + 1,2-di-(9Z-octadecenoyl)-sn-glycero-3-phosphoethanolamine = N-(5Z,8Z,11Z,14Z-eicosatetraenoyl)-1,2-di-(9Z-octadecenoyl)-sn-glycero-3-phosphoethanolamine + 1-hexadecanoyl-sn-glycero-3-phosphocholine + H(+). It catalyses the reaction 1,2-di-(9Z-octadecenoyl)-sn-glycero-3-phosphoethanolamine + 1,2-dihexadecanoyl-sn-glycero-3-phosphocholine = N-hexadecanoyl-1,2-di-(9Z-octadecenoyl)-sn-glycero-3-phosphoethanolamine + 1-hexadecanoyl-sn-glycero-3-phosphocholine + H(+). The enzyme catalyses 1,2-di-(9Z-octadecenoyl)-sn-glycero-3-phosphoethanolamine + 1,2-dihexadecanoyl-sn-glycero-3-phosphocholine = N-hexadecanoyl-1,2-di-(9Z-octadecenoyl)-sn-glycero-3-phosphoethanolamine + 2-hexadecanoyl-sn-glycero-3-phosphocholine + H(+). The catalysed reaction is a 1,2-diacyl-sn-glycero-3-phosphoethanolamine + a 1,2-diacyl-sn-glycero-3-phosphocholine = an N-acyl-1,2-diacyl-sn-glycero-3-phosphoethanolamine + a 1-acyl-sn-glycero-3-phosphocholine + H(+). It carries out the reaction a 1,2-diacyl-sn-glycero-3-phosphoethanolamine + a 1,2-diacyl-sn-glycero-3-phosphocholine = an N-acyl-1,2-diacyl-sn-glycero-3-phosphoethanolamine + a 2-acyl-sn-glycero-3-phosphocholine + H(+). It catalyses the reaction 1-hexadecanoyl-2-(9Z-octadecenoyl)-sn-glycero-3-phosphocholine + 1,2-di-(9Z-octadecenoyl)-sn-glycero-3-phosphoethanolamine = N,1,2-tri-(9Z-octadecenoyl)-sn-glycero-3-phosphoethanolamine + 1-hexadecanoyl-sn-glycero-3-phosphocholine + H(+). Functionally, exhibits both phospholipase A1/2 and acyltransferase activities. Shows phospholipase A1 (PLA1) and A2 (PLA2) activity, catalyzing the calcium-independent release of fatty acids from the sn-1 or sn-2 position of glycerophospholipids. Shows N-acyltransferase activity, catalyzing the calcium-independent transfer of a fatty acyl group at the sn-1 position of phosphatidylcholine (PC) and other glycerophospholipids to the primary amine of phosphatidylethanolamine (PE), forming N-acylphosphatidylethanolamine (NAPE), which serves as precursor for N-acylethanolamines (NAEs). This Homo sapiens (Human) protein is Phospholipase A and acyltransferase 5.